A 471-amino-acid polypeptide reads, in one-letter code: Argininosuccinate lyase (471 aa).

The protein belongs to the lyase 1 family. Argininosuccinate lyase subfamily.

It localises to the cytoplasm. It carries out the reaction 2-(N(omega)-L-arginino)succinate = fumarate + L-arginine. The protein operates within amino-acid biosynthesis; L-arginine biosynthesis; L-arginine from L-ornithine and carbamoyl phosphate: step 3/3. This Acidiphilium cryptum (strain JF-5) protein is Argininosuccinate lyase.